We begin with the raw amino-acid sequence, 279 residues long: 2-dehydro-3-deoxyphosphooctonate aldolase (279 aa).

Belongs to the KdsA family.

The protein localises to the cytoplasm. It catalyses the reaction D-arabinose 5-phosphate + phosphoenolpyruvate + H2O = 3-deoxy-alpha-D-manno-2-octulosonate-8-phosphate + phosphate. The protein operates within carbohydrate biosynthesis; 3-deoxy-D-manno-octulosonate biosynthesis; 3-deoxy-D-manno-octulosonate from D-ribulose 5-phosphate: step 2/3. It functions in the pathway bacterial outer membrane biogenesis; lipopolysaccharide biosynthesis. The protein is 2-dehydro-3-deoxyphosphooctonate aldolase of Aromatoleum aromaticum (strain DSM 19018 / LMG 30748 / EbN1) (Azoarcus sp. (strain EbN1)).